Consider the following 243-residue polypeptide: Small ribosomal subunit protein uS2 (243 aa).

This sequence belongs to the universal ribosomal protein uS2 family.

This is Small ribosomal subunit protein uS2 from Pseudoalteromonas atlantica (strain T6c / ATCC BAA-1087).